A 365-amino-acid chain; its full sequence is MFVVLFVLTLILLYAVFVVWAERKVAAFIQDRLGPMEVGPYGMLQTIADLIKLLQKEDIIATGANRFLFRLAPVLIFTAIFAGFATLPFAPDLIGSKADVGVFFMITIVSLDVVGIFLAGWASNNKFSILGAFRAIAQVISYEIPLTLSILAVVLICQTLDLQEISFQQGIYFVNKQELNTSLFGITSLGIDVNKIGGFVSWNAFKYPFLLLAYVVFFIASLAECNRAPFDIPEGESELVSGFHTEYTGFRFAILFLAEYAMMLLVAFLGVVLFFGSWNTALPNIGSLHFADWTSGTPGTIAGYAWGLFWLISKGITVVFLQLVMRWTYPRLRVDQLMNLCWKILLPLSLFLVIVSGVWVVWMKI.

The next 8 membrane-spanning stretches (helical) occupy residues 1–21, 71–91, 100–120, 136–156, 199–219, 254–274, 301–321, and 342–362; these read MFVV…VVWA, LAPV…PFAP, VGVF…FLAG, IAQV…VVLI, FVSW…VFFI, ILFL…VVLF, IAGY…VVFL, and WKIL…WVVW.

The protein belongs to the complex I subunit 1 family. As to quaternary structure, NDH-1 is composed of 14 different subunits. Subunits NuoA, H, J, K, L, M, N constitute the membrane sector of the complex.

The protein resides in the cell inner membrane. The enzyme catalyses a quinone + NADH + 5 H(+)(in) = a quinol + NAD(+) + 4 H(+)(out). Functionally, NDH-1 shuttles electrons from NADH, via FMN and iron-sulfur (Fe-S) centers, to quinones in the respiratory chain. The immediate electron acceptor for the enzyme in this species is believed to be ubiquinone. Couples the redox reaction to proton translocation (for every two electrons transferred, four hydrogen ions are translocated across the cytoplasmic membrane), and thus conserves the redox energy in a proton gradient. This subunit may bind ubiquinone. This chain is NADH-quinone oxidoreductase subunit H 2, found in Cytophaga hutchinsonii (strain ATCC 33406 / DSM 1761 / CIP 103989 / NBRC 15051 / NCIMB 9469 / D465).